The chain runs to 378 residues: tRNA-specific 2-thiouridylase MnmA (378 aa).

ATP contacts are provided by residues 7–14 and methionine 33; that span reads GLSGGVDS. The segment at 102–104 is interaction with target base in tRNA; sequence NPD. Cysteine 107 functions as the Nucleophile in the catalytic mechanism. Cysteine 107 and cysteine 209 form a disulfide bridge. ATP is bound at residue glycine 132. Residues 159-161 are interaction with tRNA; that stretch reads KDQ. Cysteine 209 functions as the Cysteine persulfide intermediate in the catalytic mechanism. The interval 316–317 is interaction with tRNA; the sequence is RY.

This sequence belongs to the MnmA/TRMU family.

The protein resides in the cytoplasm. It catalyses the reaction S-sulfanyl-L-cysteinyl-[protein] + uridine(34) in tRNA + AH2 + ATP = 2-thiouridine(34) in tRNA + L-cysteinyl-[protein] + A + AMP + diphosphate + H(+). Its function is as follows. Catalyzes the 2-thiolation of uridine at the wobble position (U34) of tRNA, leading to the formation of s(2)U34. The chain is tRNA-specific 2-thiouridylase MnmA from Aster yellows witches'-broom phytoplasma (strain AYWB).